Consider the following 188-residue polypeptide: V-type proton ATPase subunit E (188 aa).

It belongs to the V-ATPase E subunit family.

Functionally, produces ATP from ADP in the presence of a proton gradient across the membrane. In Dictyoglomus turgidum (strain DSM 6724 / Z-1310), this protein is V-type proton ATPase subunit E.